Consider the following 123-residue polypeptide: Small ribosomal subunit protein uS13 (123 aa).

The disordered stretch occupies residues 93–123; the sequence is RRNLPVRGQKTKTNARTRKGPKRAIGGKKKK.

This sequence belongs to the universal ribosomal protein uS13 family. As to quaternary structure, part of the 30S ribosomal subunit. Forms a loose heterodimer with protein S19. Forms two bridges to the 50S subunit in the 70S ribosome.

In terms of biological role, located at the top of the head of the 30S subunit, it contacts several helices of the 16S rRNA. In the 70S ribosome it contacts the 23S rRNA (bridge B1a) and protein L5 of the 50S subunit (bridge B1b), connecting the 2 subunits; these bridges are implicated in subunit movement. Contacts the tRNAs in the A and P-sites. The chain is Small ribosomal subunit protein uS13 from Clostridium botulinum (strain Loch Maree / Type A3).